A 431-amino-acid polypeptide reads, in one-letter code: Enolase (431 aa).

Gln167 contributes to the (2R)-2-phosphoglycerate binding site. Glu209 acts as the Proton donor in catalysis. The Mg(2+) site is built by Asp246, Glu289, and Asp316. 4 residues coordinate (2R)-2-phosphoglycerate: Lys341, Arg370, Ser371, and Lys392. The active-site Proton acceptor is Lys341.

Belongs to the enolase family. Component of the RNA degradosome, a multiprotein complex involved in RNA processing and mRNA degradation. Mg(2+) is required as a cofactor.

The protein localises to the cytoplasm. Its subcellular location is the secreted. It localises to the cell surface. The catalysed reaction is (2R)-2-phosphoglycerate = phosphoenolpyruvate + H2O. The protein operates within carbohydrate degradation; glycolysis; pyruvate from D-glyceraldehyde 3-phosphate: step 4/5. Its function is as follows. Catalyzes the reversible conversion of 2-phosphoglycerate (2-PG) into phosphoenolpyruvate (PEP). It is essential for the degradation of carbohydrates via glycolysis. This chain is Enolase, found in Shewanella sp. (strain MR-4).